The following is a 167-amino-acid chain: Photosystem I assembly protein Ycf3 (167 aa).

TPR repeat units follow at residues 35–68 (AFAY…EVDA), 72–105 (SYIL…NPSL), and 120–153 (GEQA…APTN).

It belongs to the Ycf3 family.

It is found in the plastid. The protein resides in the chloroplast thylakoid membrane. In terms of biological role, essential for the assembly of the photosystem I (PSI) complex. May act as a chaperone-like factor to guide the assembly of the PSI subunits. The chain is Photosystem I assembly protein Ycf3 from Stigeoclonium helveticum (Green alga).